The primary structure comprises 264 residues: uncharacterized protein (264 aa).

Positions 1–22 are cleaved as a signal peptide; that stretch reads MKSIKRIGLCISLLILIIFVTS. Cys23 carries N-palmitoyl cysteine lipidation. Cys23 carries the S-diacylglycerol cysteine lipid modification.

This sequence belongs to the staphylococcal tandem lipoprotein family.

It localises to the cell membrane. This is an uncharacterized protein from Staphylococcus aureus (strain MRSA252).